Reading from the N-terminus, the 270-residue chain is Centriole, cilia and spindle-associated protein (270 aa).

Methionine 1 bears the N-acetylmethionine mark. Residues 9 to 15 (SEYMKRY) carry the ST]-E-Y-X(3)-Y motif 1; required for efficient microtubule binding and stabilization motif. Disordered stretches follow at residues 50–201 (DDWG…SQKT) and 231–255 (LVAQRQRAHSVDVEKNRKMKASSSE). Residues 53–67 (GPAGSSEDSASSESS) are compositionally biased toward low complexity. The segment covering 75–86 (RCAPPSPPPPVE) has biased composition (pro residues). Residues 92-101 (EAERRARGAP) show a composition bias toward basic and acidic residues. Acidic residues predominate over residues 102–118 (EEQDAEAGDAEAEDAED). Positions 127-144 (KDVEDKPEQQTRTRETDK) are enriched in basic and acidic residues. A compositionally biased stretch (polar residues) spans 145–156 (SPTSTEPRQQPS). Positions 260–266 (TEYMRCY) match the ST]-E-Y-X(3)-Y motif 2; required for efficient microtubule binding and stabilization motif.

Belongs to the CCSAP family. Associates with microtubules; the association occurs on polyglutamylated tubulin.

The protein localises to the cytoplasm. Its subcellular location is the cytoskeleton. It is found in the microtubule organizing center. The protein resides in the centrosome. It localises to the centriole. The protein localises to the spindle. Its subcellular location is the cilium basal body. It is found in the cilium axoneme. The protein resides in the cell projection. It localises to the axon. The protein localises to the cilium. Plays a role in microtubule (MT) stabilization and this stabilization involves the maintenance of NUMA1 at the spindle poles. Colocalizes with polyglutamylated MTs to promote MT stabilization and regulate bipolar spindle formation in mitosis. Binding of CCSAP to centrosomes and the spindle around centrosomes during mitosis inhibits MT depolymerization, thereby stabilizing the mitotic spindle. May play a role in embryonic development. May be required for proper cilia beating. In Homo sapiens (Human), this protein is Centriole, cilia and spindle-associated protein (CCSAP).